The following is a 208-amino-acid chain: ATP-dependent Clp protease proteolytic subunit (208 aa).

Catalysis depends on Ser-112, which acts as the Nucleophile. His-137 is an active-site residue.

The protein belongs to the peptidase S14 family. As to quaternary structure, fourteen ClpP subunits assemble into 2 heptameric rings which stack back to back to give a disk-like structure with a central cavity, resembling the structure of eukaryotic proteasomes.

The protein resides in the cytoplasm. It carries out the reaction Hydrolysis of proteins to small peptides in the presence of ATP and magnesium. alpha-casein is the usual test substrate. In the absence of ATP, only oligopeptides shorter than five residues are hydrolyzed (such as succinyl-Leu-Tyr-|-NHMec, and Leu-Tyr-Leu-|-Tyr-Trp, in which cleavage of the -Tyr-|-Leu- and -Tyr-|-Trp bonds also occurs).. Cleaves peptides in various proteins in a process that requires ATP hydrolysis. Has a chymotrypsin-like activity. Plays a major role in the degradation of misfolded proteins. In Buchnera aphidicola subsp. Acyrthosiphon pisum (strain APS) (Acyrthosiphon pisum symbiotic bacterium), this protein is ATP-dependent Clp protease proteolytic subunit.